The following is a 219-amino-acid chain: Orotate phosphoribosyltransferase (219 aa).

Lysine 26 is a 5-phospho-alpha-D-ribose 1-diphosphate binding site. Phenylalanine 34 to phenylalanine 35 provides a ligand contact to orotate. 5-phospho-alpha-D-ribose 1-diphosphate is bound by residues tyrosine 72–lysine 73, arginine 98, lysine 99, lysine 102, histidine 104, and aspartate 124–alanine 132. Threonine 128 and arginine 156 together coordinate orotate.

The protein belongs to the purine/pyrimidine phosphoribosyltransferase family. PyrE subfamily. In terms of assembly, homodimer. Mg(2+) is required as a cofactor.

It catalyses the reaction orotidine 5'-phosphate + diphosphate = orotate + 5-phospho-alpha-D-ribose 1-diphosphate. The protein operates within pyrimidine metabolism; UMP biosynthesis via de novo pathway; UMP from orotate: step 1/2. Catalyzes the transfer of a ribosyl phosphate group from 5-phosphoribose 1-diphosphate to orotate, leading to the formation of orotidine monophosphate (OMP). This chain is Orotate phosphoribosyltransferase, found in Stenotrophomonas maltophilia (strain R551-3).